A 470-amino-acid chain; its full sequence is Cannabinoid receptor 1 (470 aa).

Over 1-121 (MKSILDGLAD…TPSQQLVIAA (121 aa)) the chain is Extracellular. The required for mitochondrial localization stretch occupies residues 2–23 (KSILDGLADTTFRTITTDLLYL). N-linked (GlcNAc...) asparagine glycans are attached at residues Asn78 and Asn84. A helical transmembrane segment spans residues 122–142 (LSIILGTFTVLENMLVLVVIV). The Cytoplasmic segment spans residues 143-154 (QSRSLRCRPSYH). Residues 155–175 (FIGSLAVADLLGSVIFVYSFV) traverse the membrane as a helical segment. Topologically, residues 176 to 187 (DFHVFHRKDSPN) are extracellular. Residues 188-208 (VFLFKLGGVTASFTASVGSLF) form a helical membrane-spanning segment. The Cytoplasmic portion of the chain corresponds to 209-232 (LTAIDRYISIHRPMSYKRIVTRTK). Residues 233-253 (AVIAFCMMWTIAIVIAVLPLF) form a helical membrane-spanning segment. The Extracellular portion of the chain corresponds to 254-277 (GWNCIKLRSVCSDIFPLIDETYLM). A helical transmembrane segment spans residues 278-298 (FWIGVTSVLLLFIVYAYMYIL). Over 299 to 344 (WKAHNHAVRMLQRGTQKSIIVHTSEDGKVHITRPDQTRMDIRLAKT) the chain is Cytoplasmic. Residues 345 to 365 (LVLILVVLIICWGPLMAIMVY) form a helical membrane-spanning segment. Over 366 to 377 (DVFGKINKTIKT) the chain is Extracellular. Asn372 is a glycosylation site (N-linked (GlcNAc...) asparagine). The helical transmembrane segment at 378–398 (VFAFCSVLCLLNSTVNPIIYA) threads the bilayer. At 399–470 (LRSKDLRNAF…VSTDTSAEAV (72 aa)) the chain is on the cytoplasmic side. Residue Cys415 is the site of S-palmitoyl cysteine attachment.

The protein belongs to the G-protein coupled receptor 1 family. Palmitoylation at Cys-415 is important for recruitment at both plasma membrane and lipid rafts and association with G protein alpha subunits. Expressed in neurons, especially in the olfactory bulbs, telencephalic pallium, and hypothalamus and also in the midbrain and hindbrain (in the mesencephalic tegmentum and dorsolateral rhombencephalon). Expressed also in the spinal cord.

Its subcellular location is the cell membrane. The protein resides in the mitochondrion outer membrane. It localises to the cell projection. It is found in the axon. The protein localises to the presynapse. G-protein coupled receptor for cannabinoids. Mediates many cannabinoid-induced effects in the central nervous system (CNS), as well as in peripheral tissues. Regulates cellular respiration and energy production in response to cannabinoids. Signaling typically involves reduction in cyclic AMP. The protein is Cannabinoid receptor 1 (cnr1) of Xenopus laevis (African clawed frog).